Reading from the N-terminus, the 330-residue chain is MTRMLPGYFPSPPRGVWHLGPLPIRAYALLIILGIVAALVVGGRCWEARGGERDVTYDIALWAVPFGLVGGRLYHLATDWRTYFGQNGAGLGAALRIWDGGLGIWGAVALGCVGAWLGCRRHRIPLPAFGDALAPGIILAQAIGRLGNYFNQELYGRETTMPWGLEVFYRRDPAGYMDPHSLDGVSTGQLAFVVQPTFLYELIWNVLVFFALIYVDRWFTLGHGRLFATYVAAYCIGRFCVELLRDDAATHIAGIRINSFTSTFVFIGAVVYIILAPKGREEPENLCRAEYVAREIPEPESATERATVASTYATTTAVPVSADEEFAETN.

Transmembrane regions (helical) follow at residues 22–42 (LPIR…LVVG), 57–77 (YDIA…YHLA), and 97–117 (IWDG…GAWL). Position 145 (arginine 145) interacts with a 1,2-diacyl-sn-glycero-3-phospho-(1'-sn-glycerol). A run of 2 helical transmembrane segments spans residues 193 to 213 (VVQP…FALI) and 257 to 277 (INSF…ILAP).

This sequence belongs to the Lgt family.

The protein localises to the cell membrane. It carries out the reaction L-cysteinyl-[prolipoprotein] + a 1,2-diacyl-sn-glycero-3-phospho-(1'-sn-glycerol) = an S-1,2-diacyl-sn-glyceryl-L-cysteinyl-[prolipoprotein] + sn-glycerol 1-phosphate + H(+). It participates in protein modification; lipoprotein biosynthesis (diacylglyceryl transfer). In terms of biological role, catalyzes the transfer of the diacylglyceryl group from phosphatidylglycerol to the sulfhydryl group of the N-terminal cysteine of a prolipoprotein, the first step in the formation of mature lipoproteins. The sequence is that of Phosphatidylglycerol--prolipoprotein diacylglyceryl transferase from Mycobacterium leprae (strain Br4923).